A 1058-amino-acid polypeptide reads, in one-letter code: Leucine--tRNA ligase, cytoplasmic (1058 aa).

The short motif at 48 to 58 (PYMNGRLHVGH) is the 'HIGH' region element. The 'KMSKS' region signature appears at 711–715 (KMSKS). Residue Lys-714 coordinates ATP.

Belongs to the class-I aminoacyl-tRNA synthetase family.

The protein localises to the cytoplasm. The catalysed reaction is tRNA(Leu) + L-leucine + ATP = L-leucyl-tRNA(Leu) + AMP + diphosphate. In Dictyostelium discoideum (Social amoeba), this protein is Leucine--tRNA ligase, cytoplasmic (leuS).